A 112-amino-acid chain; its full sequence is UPF0060 membrane protein XOO1694 (112 aa).

4 helical membrane-spanning segments follow: residues 8–28, 32–52, 62–82, and 92–112; these read LLLF…PYLW, GGSV…VWLL, VYAA…LWWV, and LLGA…PRSA.

This sequence belongs to the UPF0060 family.

It localises to the cell inner membrane. The protein is UPF0060 membrane protein XOO1694 of Xanthomonas oryzae pv. oryzae (strain MAFF 311018).